A 120-amino-acid polypeptide reads, in one-letter code: Holo-[acyl-carrier-protein] synthase (120 aa).

The Mg(2+) site is built by Asp-8 and Glu-58.

The protein belongs to the P-Pant transferase superfamily. AcpS family. Mg(2+) is required as a cofactor.

The protein localises to the cytoplasm. The catalysed reaction is apo-[ACP] + CoA = holo-[ACP] + adenosine 3',5'-bisphosphate + H(+). Transfers the 4'-phosphopantetheine moiety from coenzyme A to a Ser of acyl-carrier-protein. This Streptococcus sanguinis (strain SK36) protein is Holo-[acyl-carrier-protein] synthase.